Reading from the N-terminus, the 141-residue chain is Small ribosomal subunit protein uS19 (141 aa).

It belongs to the universal ribosomal protein uS19 family.

Protein S19 forms a complex with S13 that binds strongly to the 16S ribosomal RNA. The chain is Small ribosomal subunit protein uS19 from Halorubrum lacusprofundi (strain ATCC 49239 / DSM 5036 / JCM 8891 / ACAM 34).